A 341-amino-acid chain; its full sequence is L-threonine 3-dehydrogenase (341 aa).

Residue Cys38 participates in Zn(2+) binding. Active-site charge relay system residues include Thr40 and His43. Zn(2+) contacts are provided by His63, Glu64, Cys93, Cys96, Cys99, and Cys107. Residues Ile175, Asp195, Arg200, 262–264 (LGI), and 286–287 (IY) contribute to the NAD(+) site.

It belongs to the zinc-containing alcohol dehydrogenase family. Homotetramer. Zn(2+) is required as a cofactor.

It localises to the cytoplasm. The catalysed reaction is L-threonine + NAD(+) = (2S)-2-amino-3-oxobutanoate + NADH + H(+). It functions in the pathway amino-acid degradation; L-threonine degradation via oxydo-reductase pathway; glycine from L-threonine: step 1/2. In terms of biological role, catalyzes the NAD(+)-dependent oxidation of L-threonine to 2-amino-3-ketobutyrate. The polypeptide is L-threonine 3-dehydrogenase (Pseudoalteromonas translucida (strain TAC 125)).